We begin with the raw amino-acid sequence, 111 residues long: SPbeta prophage-derived uncharacterized protein YolC (111 aa).

The signal sequence occupies residues 1–25 (MKKRLIGFLVLVPALIMSGITLIEA).

The sequence is that of SPbeta prophage-derived uncharacterized protein YolC (yolC) from Bacillus subtilis (strain 168).